Reading from the N-terminus, the 140-residue chain is L-fucose mutarotase (140 aa).

Residue His-22 is the Proton donor of the active site. Substrate is bound by residues Asp-30, Arg-107, and 129 to 131 (YGN).

Belongs to the RbsD / FucU family. FucU mutarotase subfamily. Homodecamer.

The protein localises to the cytoplasm. It catalyses the reaction alpha-L-fucose = beta-L-fucose. The protein operates within carbohydrate metabolism; L-fucose metabolism. Its function is as follows. Involved in the anomeric conversion of L-fucose. The protein is L-fucose mutarotase of Klebsiella pneumoniae (strain 342).